A 1342-amino-acid chain; its full sequence is DNA-directed RNA polymerase subunit beta (1342 aa).

The protein belongs to the RNA polymerase beta chain family. As to quaternary structure, the RNAP catalytic core consists of 2 alpha, 1 beta, 1 beta' and 1 omega subunit. When a sigma factor is associated with the core the holoenzyme is formed, which can initiate transcription.

The enzyme catalyses RNA(n) + a ribonucleoside 5'-triphosphate = RNA(n+1) + diphosphate. Functionally, DNA-dependent RNA polymerase catalyzes the transcription of DNA into RNA using the four ribonucleoside triphosphates as substrates. In Pasteurella multocida (strain Pm70), this protein is DNA-directed RNA polymerase subunit beta.